Here is a 378-residue protein sequence, read N- to C-terminus: Nucleosome assembly protein 1;1 (378 aa).

Residues 33-87 are a coiled coil; that stretch reads VNALKDKLQSLAGQHTDVLEALSPNVRKRVEYLREIQGQHDEIELKFFEERAALE. The Nuclear export signal signature appears at 54-69; sequence LSPNVRKRVEYLREIQ. A Nuclear localization signal motif is present at residues 230–235; sequence KKKPKK. The interval 306–378 is disordered; sequence AVQAEDFDDM…ADQPADCKQQ (73 aa). Residues 308–344 are compositionally biased toward acidic residues; it reads QAEDFDDMEDDEEDDEDDDEDEEEEEEDEDEDEDDEE. Residues 348–352 carry the Nuclear localization signal motif; sequence KPKKK. A compositionally biased stretch (low complexity) spans 356–378; sequence KPKLPSKGGAQGGADQPADCKQQ. Cysteine methyl ester is present on Cys-375. Cys-375 is lipidated: S-farnesyl cysteine. Residues 376 to 378 constitute a propeptide, removed in mature form; it reads KQQ.

It belongs to the nucleosome assembly protein (NAP) family.

The protein localises to the nucleus. It localises to the cytoplasm. Functionally, may modulate chromatin structure by regulation of nucleosome assembly/disassembly. The protein is Nucleosome assembly protein 1;1 (NAP1;1) of Oryza sativa subsp. japonica (Rice).